A 210-amino-acid chain; its full sequence is Somatotropin (210 aa).

Residues 1–23 form the signal peptide; it reads MARALVLLSVVLVSLLVNQGTAS. His38 is a Zn(2+) binding site. Residues Cys71 and Cys183 are joined by a disulfide bond. Glu192 is a binding site for Zn(2+). An intrachain disulfide couples Cys200 to Cys208.

Belongs to the somatotropin/prolactin family.

The protein resides in the secreted. In terms of biological role, growth hormone plays an important role in growth control. In Ctenopharyngodon idella (Grass carp), this protein is Somatotropin (gh).